Here is a 259-residue protein sequence, read N- to C-terminus: Alpha-acetolactate decarboxylase (259 aa).

This sequence belongs to the alpha-acetolactate decarboxylase family.

The catalysed reaction is (2S)-2-acetolactate + H(+) = (R)-acetoin + CO2. Its pathway is polyol metabolism; (R,R)-butane-2,3-diol biosynthesis; (R,R)-butane-2,3-diol from pyruvate: step 2/3. In terms of biological role, converts acetolactate into acetoin, which can be excreted by the cells. This may be a mechanism for controlling the internal pH of cells in the stationary stage. The sequence is that of Alpha-acetolactate decarboxylase (budA) from Raoultella terrigena (Klebsiella terrigena).